The sequence spans 372 residues: tRNA-specific 2-thiouridylase MnmA (372 aa).

ATP contacts are provided by residues 17 to 24 and methionine 43; that span reads GMSGGVDS. The interaction with target base in tRNA stretch occupies residues 103–105; that stretch reads NPD. The Nucleophile role is filled by cysteine 108. A disulfide bond links cysteine 108 and cysteine 207. Residue glycine 133 participates in ATP binding. The interaction with tRNA stretch occupies residues 157-159; that stretch reads KDQ. Cysteine 207 (cysteine persulfide intermediate) is an active-site residue. The interaction with tRNA stretch occupies residues 319–320; the sequence is RY.

The protein belongs to the MnmA/TRMU family.

The protein resides in the cytoplasm. It carries out the reaction S-sulfanyl-L-cysteinyl-[protein] + uridine(34) in tRNA + AH2 + ATP = 2-thiouridine(34) in tRNA + L-cysteinyl-[protein] + A + AMP + diphosphate + H(+). Its function is as follows. Catalyzes the 2-thiolation of uridine at the wobble position (U34) of tRNA, leading to the formation of s(2)U34. In Vibrio cholerae serotype O1 (strain ATCC 39541 / Classical Ogawa 395 / O395), this protein is tRNA-specific 2-thiouridylase MnmA.